Here is a 206-residue protein sequence, read N- to C-terminus: Small ribosomal subunit protein uS4 (206 aa).

Residues 96–156 form the S4 RNA-binding domain; sequence TRLDNVVYRM…EKSRTQARIK (61 aa).

Belongs to the universal ribosomal protein uS4 family. As to quaternary structure, part of the 30S ribosomal subunit. Contacts protein S5. The interaction surface between S4 and S5 is involved in control of translational fidelity.

Functionally, one of the primary rRNA binding proteins, it binds directly to 16S rRNA where it nucleates assembly of the body of the 30S subunit. Its function is as follows. With S5 and S12 plays an important role in translational accuracy. This is Small ribosomal subunit protein uS4 from Shewanella sp. (strain ANA-3).